A 168-amino-acid chain; its full sequence is MKPTKMRNKMIYRASYQTKSKQLGSALSKDLQKKYGKRSVRVNEGDSVTILRGEFKGVDGKVAEVSTAKSSVAIEGVKKEKTKGDKFDVFIHTSNLLVTSLNTEDKWRIAKLEGKDPRKQPKEAPKAAEKPAKEEPKKETPKAEEKPAKEEPKETKVEKKSEEKEDEN.

The disordered stretch occupies residues 112 to 168 (LEGKDPRKQPKEAPKAAEKPAKEEPKKETPKAEEKPAKEEPKETKVEKKSEEKEDEN).

Belongs to the universal ribosomal protein uL24 family. Part of the 50S ribosomal subunit.

In terms of biological role, one of two assembly initiator proteins, it binds directly to the 5'-end of the 23S rRNA, where it nucleates assembly of the 50S subunit. Functionally, located at the polypeptide exit tunnel on the outside of the subunit. In Nitrosopumilus maritimus (strain SCM1), this protein is Large ribosomal subunit protein uL24.